The sequence spans 105 residues: Thioredoxin (105 aa).

The Thioredoxin domain occupies Val2–Val105. Lys3 carries the post-translational modification N6-acetyllysine. Lys8 carries the N6-succinyllysine modification. Active-site nucleophile residues include Cys32 and Cys35. Cys32 and Cys35 are oxidised to a cystine. Lys39 carries the N6-acetyllysine modification. Cys62 and Cys69 each carry S-nitrosocysteine. The residue at position 73 (Cys73) is an S-nitrosocysteine; alternate. At Lys94 the chain carries N6-acetyllysine; alternate. The residue at position 94 (Lys94) is an N6-succinyllysine; alternate.

The protein belongs to the thioredoxin family. In terms of assembly, homodimer; disulfide-linked. Interacts with TXNIP through the redox-active site. Interacts with MAP3K5 and CASP3. Interacts with APEX1; the interaction stimulates the FOS/JUN AP-1 DNA-binding activity in a redox-dependent manner. In the fully reduced protein, both Cys-69 and Cys-73 are nitrosylated in response to nitric oxide (NO). When two disulfide bonds are present in the protein, only Cys-73 is nitrosylated. Cys-73 can serve as donor for nitrosylation of target proteins.

The protein localises to the nucleus. It is found in the cytoplasm. It localises to the secreted. In terms of biological role, participates in various redox reactions through the reversible oxidation of its active center dithiol to a disulfide and catalyzes dithiol-disulfide exchange reactions. Plays a role in the reversible S-nitrosylation of cysteine residues in target proteins, and thereby contributes to the response to intracellular nitric oxide. Nitrosylates the active site Cys of CASP3 in response to nitric oxide (NO), and thereby inhibits caspase-3 activity. Induces the FOS/JUN AP-1 DNA binding activity in ionizing radiation (IR) cells through its oxidation/reduction status and stimulates AP-1 transcriptional activity. The polypeptide is Thioredoxin (TXN) (Callithrix jacchus (White-tufted-ear marmoset)).